Here is a 692-residue protein sequence, read N- to C-terminus: Elongation factor G (692 aa).

Positions 8–283 (DHVRNIGIMA…AVVDYFPSPS (276 aa)) constitute a tr-type G domain. Residues 17–24 (AHIDAGKT), 81–85 (DTPGH), and 135–138 (NKMD) each bind GTP.

The protein belongs to the TRAFAC class translation factor GTPase superfamily. Classic translation factor GTPase family. EF-G/EF-2 subfamily.

It is found in the cytoplasm. Catalyzes the GTP-dependent ribosomal translocation step during translation elongation. During this step, the ribosome changes from the pre-translocational (PRE) to the post-translocational (POST) state as the newly formed A-site-bound peptidyl-tRNA and P-site-bound deacylated tRNA move to the P and E sites, respectively. Catalyzes the coordinated movement of the two tRNA molecules, the mRNA and conformational changes in the ribosome. This is Elongation factor G from Magnetococcus marinus (strain ATCC BAA-1437 / JCM 17883 / MC-1).